A 340-amino-acid chain; its full sequence is Thylakoidal processing peptidase 1, chloroplastic (340 aa).

A chloroplast-targeting transit peptide spans 1–52 (MAIRITFTYSTHVARNLVGTRVGPGGYCFESLVRPRFFSHKRDFDRSPRNRP). A helical transmembrane segment spans residues 155–175 (EDAKAAFTAVTVSILFRSALA). Topologically, residues 176 to 340 (EPKSIPSTSM…AITRGPVAVS (165 aa)) are lumenal, thylakoid. The active site involves Ser-184.

The protein belongs to the peptidase S26 family.

The protein resides in the plastid. It is found in the chloroplast thylakoid membrane. It carries out the reaction Cleavage of hydrophobic, N-terminal signal or leader sequences from secreted and periplasmic proteins.. Its function is as follows. Cleaves the thylakoid-transfer domain from a chloroplast protein. In Arabidopsis thaliana (Mouse-ear cress), this protein is Thylakoidal processing peptidase 1, chloroplastic (TPP1).